We begin with the raw amino-acid sequence, 21 residues long: Major outer membrane protein (21 aa).

Disulfide bond interactions within and between MOMP molecules and other components form high molecular-weight oligomers.

Its subcellular location is the cell outer membrane. Its function is as follows. Structural rigidity of the outer membrane of elementary bodies and porin forming, permitting diffusion of solutes through the intracellular reticulate body membrane. The protein is Major outer membrane protein of Actinobacillus equuli.